The sequence spans 200 residues: dITP/XTP pyrophosphatase (200 aa).

7–12 (SNNRGK) contributes to the substrate binding site. Asp-68 (proton acceptor) is an active-site residue. Asp-68 is a Mg(2+) binding site. Substrate is bound by residues Ala-69, 154 to 157 (FGFD), Lys-177, and 182 to 183 (HR).

It belongs to the HAM1 NTPase family. As to quaternary structure, homodimer. Requires Mg(2+) as cofactor.

The catalysed reaction is XTP + H2O = XMP + diphosphate + H(+). The enzyme catalyses dITP + H2O = dIMP + diphosphate + H(+). It catalyses the reaction ITP + H2O = IMP + diphosphate + H(+). Its function is as follows. Pyrophosphatase that catalyzes the hydrolysis of nucleoside triphosphates to their monophosphate derivatives, with a high preference for the non-canonical purine nucleotides XTP (xanthosine triphosphate), dITP (deoxyinosine triphosphate) and ITP. Seems to function as a house-cleaning enzyme that removes non-canonical purine nucleotides from the nucleotide pool, thus preventing their incorporation into DNA/RNA and avoiding chromosomal lesions. This is dITP/XTP pyrophosphatase from Delftia acidovorans (strain DSM 14801 / SPH-1).